The following is a 538-amino-acid chain: Telomerase Cajal body protein 1 (538 aa).

Positions 1–53 are disordered; that stretch reads MKTSEERLVVPDSLSSDQAPAPVPQGSPVDENTDSEPVPQPCGGDDRSQVAAD. 2 positions are modified to phosphoserine: Ser27 and Ser87. Positions 92–128 are disordered; sequence EQELSENVSLPVEDTNQPELASGEDVEGVSEEPGPVD. Acidic residues predominate over residues 113–128; the sequence is SGEDVEGVSEEPGPVD. 6 WD repeats span residues 154–194, 210–255, 260–301, 311–352, 353–393, and 399–438; these read AHSE…YSAT, EGDT…LRAS, NHLD…RDCE, GQSG…ALLG, GHQG…HLLW, and VTTN…GDSS. Disordered regions lie at residues 471–491 and 509–538; these read QRMF…GDLP and CGGG…DGLI. Residue Thr478 is modified to Phosphothreonine. Ser480 bears the Phosphoserine mark. The segment covering 529-538 has biased composition (gly residues); it reads RAEGCGDGLI.

The protein belongs to the TCAB1 family. In terms of assembly, component of the telomerase holoenzyme complex composed of one molecule of TERT, one molecule of WRAP53/TCAB1, two molecules of H/ACA ribonucleoprotein complex subunits DKC1, NOP10, NHP2 and GAR1, and a telomerase RNA template component (TERC). The telomerase holoenzyme complex is associated with TEP1, SMG6/EST1A and POT1. Interacts with the chaperonin-containing T-complex (TRiC) complex; which mediates the folding of WRAP53/TCAB1. Interacts with COIL. Interacts with SMN1. Interacts with RNF8. Interacts with histone H2AX. As to expression, preferentially expressed in testis.

It is found in the nucleus. The protein localises to the cajal body. The protein resides in the chromosome. It localises to the telomere. In terms of biological role, RNA chaperone that plays a key role in telomere maintenance and RNA localization to Cajal bodies. Specifically recognizes and binds the Cajal body box (CAB box) present in both small Cajal body RNAs (scaRNAs) and telomerase RNA template component (TERC). Essential component of the telomerase holoenzyme complex, a ribonucleoprotein complex essential for the replication of chromosome termini that elongates telomeres in most eukaryotes. In the telomerase holoenzyme complex, required to stimulate the catalytic activity of the complex. Acts by specifically binding the CAB box of the TERC RNA and controlling the folding of the CR4/CR5 region of the TERC RNA, a critical step for telomerase activity. In addition, also controls telomerase holoenzyme complex localization to Cajal body. During S phase, required for delivery of TERC to telomeres during S phase and for telomerase activity. In addition to its role in telomere maintenance, also required for Cajal body formation, probably by mediating localization of scaRNAs to Cajal bodies. Also plays a role in DNA repair: relocalizes to sites of DNA double-strand breaks in response to DNA damage and promotes the repair of DNA double-strand breaks. Acts by recruiting the ubiquitin ligase RNF8 to DNA breaks and promote both homologous recombination (HR) and non-homologous end joining (NHEJ). This chain is Telomerase Cajal body protein 1, found in Mesocricetus auratus (Golden hamster).